The following is a 511-amino-acid chain: 2,3-bisphosphoglycerate-independent phosphoglycerate mutase (511 aa).

2 residues coordinate Mn(2+): aspartate 12 and serine 62. Serine 62 acts as the Phosphoserine intermediate in catalysis. Residues histidine 123, 154 to 155, arginine 181, arginine 187, 252 to 255, and lysine 335 contribute to the substrate site; these read RD and RPDR. Aspartate 402, histidine 406, aspartate 444, histidine 445, and histidine 462 together coordinate Mn(2+).

The protein belongs to the BPG-independent phosphoglycerate mutase family. As to quaternary structure, monomer. Mn(2+) serves as cofactor.

The enzyme catalyses (2R)-2-phosphoglycerate = (2R)-3-phosphoglycerate. It functions in the pathway carbohydrate degradation; glycolysis; pyruvate from D-glyceraldehyde 3-phosphate: step 3/5. In terms of biological role, catalyzes the interconversion of 2-phosphoglycerate and 3-phosphoglycerate. The protein is 2,3-bisphosphoglycerate-independent phosphoglycerate mutase of Acholeplasma laidlawii (strain PG-8A).